A 510-amino-acid chain; its full sequence is NAD(P)H-quinone oxidoreductase subunit 2 A, chloroplastic (510 aa).

Helical transmembrane passes span 26 to 46 (LFDG…ILLL), 57 to 77 (IPWF…ALLF), 99 to 119 (IFQF…VEYI), 124 to 144 (MAIT…MFLC), 149 to 169 (LITI…LSGY), 183 to 203 (YLLM…WLYG), 227 to 247 (PGIS…LSPA), 295 to 315 (WHPL…LIAI), 323 to 342 (MLAY…IIVG), 354 to 374 (YMLF…LFGL), 395 to 415 (ALSL…AGFF), 418 to 438 (LHLF…IGLF), and 484 to 504 (MIVC…IIAI).

The protein belongs to the complex I subunit 2 family. As to quaternary structure, NDH is composed of at least 16 different subunits, 5 of which are encoded in the nucleus.

It is found in the plastid. The protein localises to the chloroplast thylakoid membrane. The enzyme catalyses a plastoquinone + NADH + (n+1) H(+)(in) = a plastoquinol + NAD(+) + n H(+)(out). It carries out the reaction a plastoquinone + NADPH + (n+1) H(+)(in) = a plastoquinol + NADP(+) + n H(+)(out). NDH shuttles electrons from NAD(P)H:plastoquinone, via FMN and iron-sulfur (Fe-S) centers, to quinones in the photosynthetic chain and possibly in a chloroplast respiratory chain. The immediate electron acceptor for the enzyme in this species is believed to be plastoquinone. Couples the redox reaction to proton translocation, and thus conserves the redox energy in a proton gradient. The chain is NAD(P)H-quinone oxidoreductase subunit 2 A, chloroplastic from Oenothera biennis (German evening primrose).